We begin with the raw amino-acid sequence, 308 residues long: Ribosomal RNA large subunit methyltransferase F (308 aa).

This sequence belongs to the methyltransferase superfamily. METTL16/RlmF family.

Its subcellular location is the cytoplasm. The enzyme catalyses adenosine(1618) in 23S rRNA + S-adenosyl-L-methionine = N(6)-methyladenosine(1618) in 23S rRNA + S-adenosyl-L-homocysteine + H(+). In terms of biological role, specifically methylates the adenine in position 1618 of 23S rRNA. The polypeptide is Ribosomal RNA large subunit methyltransferase F (Escherichia coli (strain K12 / MC4100 / BW2952)).